The following is a 254-amino-acid chain: Capsid protein (254 aa).

Positions 1-12 (MRKYTRNTYTMS) are enriched in polar residues. The disordered stretch occupies residues 1–38 (MRKYTRNTYTMSQKRKVNPQSAWPKKRRTSTTSRKYQW). The Bipartite nuclear localization signal motif lies at 10 to 35 (TMSQKRKVNPQSAWPKKRRTSTTSRK).

Belongs to the geminiviridae capsid protein family. As to quaternary structure, homomultimer. Binds to single-stranded and double-stranded viral DNA. Interacts (via nuclear localization signal) with host importin alpha-1a.

The protein localises to the virion. Its subcellular location is the host nucleus. In terms of biological role, encapsidates the viral genome into characteristic twinned ('geminate') particles. Binds the genomic viral ssDNA and shuttles it into and out of the cell nucleus. Plays a role in protection of the genome from degradation, virus acquisition and transmission by insect vectors, infectivity, and systemic movement. The CP of monopartite geminiviruses is absolutely essential for virus movement. This is Capsid protein from Beet curly top virus (strain California/Logan) (BCTV).